Reading from the N-terminus, the 548-residue chain is Synaptic vesicle 2-related protein (548 aa).

Over 1 to 87 (MEEDLFQLRQ…GFGKFQWKLS (87 aa)) the chain is Cytoplasmic. Residues S25 and S31 each carry the phosphoserine modification. A helical membrane pass occupies residues 88–108 (VLTGLAWMADAMEMMILSILA). Over 109-122 (PQLHCEWRLPSWQV) the chain is Vesicular. A helical membrane pass occupies residues 123–143 (ALLTSVVFVGMMSSSTLWGNI). The Cytoplasmic segment spans residues 144–156 (SDQYGRKTGLKIS). Residues 157 to 177 (VLWTLYYGILSAFAPVYSWIL) form a helical membrane-spanning segment. Over 178–180 (VLR) the chain is Vesicular. A helical membrane pass occupies residues 181–201 (GLVGFGIGGVPQSVTLYAEFL). Over 202-209 (PMKARAKC) the chain is Cytoplasmic. Residues 210-230 (ILLIEVFWAIGTVFEVVLAVF) traverse the membrane as a helical segment. Topologically, residues 231–238 (VMPSLGWR) are vesicular. Residues 239–259 (WLLILSAVPLLLFAVLCFWLP) form a helical membrane-spanning segment. At 260-316 (ESARYDVLSGNQEKAIATLKRIATENGAPMPLGKLIISRQEDRGKMRDLFTPHFRWT) the chain is on the cytoplasmic side. A helical membrane pass occupies residues 317-337 (TLLLWFIWFSNAFSYYGLVLL). Residues 338 to 373 (TTELFQAGDVCSISSRKKAVEAKCSLACEYLSEEDY) are Vesicular-facing. Residues 374-394 (MDLLWTTLSEFPGVLVTLWII) traverse the membrane as a helical segment. Residues 395-401 (DRLGRKK) lie on the Cytoplasmic side of the membrane. A helical membrane pass occupies residues 402-422 (TMALCFVVFSFCSLLLFICVG). The Vesicular portion of the chain corresponds to 423–425 (RNM). A helical membrane pass occupies residues 426 to 446 (LTLLLFIARAFISGGFQAAYV). Residues 447–457 (YTPEVYPTATR) are Cytoplasmic-facing. Residues 458 to 478 (ALGLGTCSGMARVGALITPFI) traverse the membrane as a helical segment. Over 479–489 (AQVMLESSVYL) the chain is Vesicular. Residues 490 to 510 (TLAVYSGCCLLAALASCFLPI) form a helical membrane-spanning segment. At 511–548 (ETKGRGLQESSHREWGQEMVGRGAHGTGVARSNSGSQE) the chain is on the cytoplasmic side. The segment at 528–548 (EMVGRGAHGTGVARSNSGSQE) is disordered. S542 carries the post-translational modification Phosphoserine.

It belongs to the major facilitator superfamily. In terms of tissue distribution, detected in brain and adrenal medulla.

It localises to the cytoplasmic vesicle. The protein resides in the secretory vesicle. It is found in the synaptic vesicle membrane. This Bos taurus (Bovine) protein is Synaptic vesicle 2-related protein (SVOP).